Here is a 140-residue protein sequence, read N- to C-terminus: Small ribosomal subunit protein uS19 (140 aa).

Residues 43–71 form a disordered region; it reads IERGLTTEQQKLRETVRDADPQKTANDPI. Residues 52 to 63 show a composition bias toward basic and acidic residues; sequence QKLRETVRDADP.

It belongs to the universal ribosomal protein uS19 family.

Its function is as follows. Protein S19 forms a complex with S13 that binds strongly to the 16S ribosomal RNA. This chain is Small ribosomal subunit protein uS19, found in Haloquadratum walsbyi (strain DSM 16790 / HBSQ001).